Here is a 1726-residue protein sequence, read N- to C-terminus: Protein Shroom2 (1726 aa).

The PDZ domain maps to 79–159 (AGGCYSYWRG…ILKMIVKRRN (81 aa)). Disordered regions lie at residues 294 to 373 (DNTK…RSDS), 425 to 451 (RTVA…LSPY), 657 to 676 (FSQL…DYSW), and 697 to 785 (EGRN…STYR). The segment covering 318–328 (VLQSTSINETS) has biased composition (polar residues). Over residues 329–338 (KIQRTEDNTE) the composition is skewed to basic and acidic residues. A compositionally biased stretch (basic and acidic residues) spans 657–667 (FSQLDHSEKGS). Composition is skewed to polar residues over residues 746–755 (SKSTAALTES) and 769–785 (LESM…STYR). One can recognise an ASD1 domain in the interval 788–877 (LQEAQARVLR…SEPEKINEVG (90 aa)). Disordered stretches follow at residues 913–968 (PKVP…DKVT), 1007–1080 (LDAD…QCGA), 1092–1120 (KWKP…GTLP), 1166–1240 (FKKR…KNPS), 1269–1299 (SSKS…DKPP), and 1471–1499 (AQQR…VPSA). The segment covering 917 to 926 (PKVVSSSQSE) has biased composition (low complexity). The segment covering 936 to 948 (DYAKSSEGQESKR) has biased composition (basic and acidic residues). Composition is skewed to polar residues over residues 1054–1070 (NSNS…SPTR) and 1104–1119 (ETSN…SGTL). Positions 1191-1205 (SSSSLATSSESLLTA) are enriched in low complexity. The span at 1209-1235 (RAQSYSPSSQDTFPPQSLQKQSPSTYP) shows a compositional bias: polar residues. The ASD2 domain occupies 1427–1721 (EELVREIVDK…QLKCLTDSLP (295 aa)).

Belongs to the shroom family. As to quaternary structure, interacts with F-actin.

It is found in the apical cell membrane. It localises to the cell junction. Its subcellular location is the tight junction. The protein resides in the cytoplasm. The protein localises to the cytoskeleton. Functionally, may be involved in endothelial cell morphology changes during cell spreading. Required for eye pigmentation. In the retinal pigment epithelium, regulates the biogenesis of melanosomes and promotes their association with the apical cell surface by inducing gamma-tubulin redistribution. The sequence is that of Protein Shroom2 (shroom2) from Xenopus tropicalis (Western clawed frog).